A 234-amino-acid chain; its full sequence is Small ribosomal subunit protein eS1y (234 aa).

Residues 1-18 are compositionally biased toward basic residues; the sequence is MAVGKNKRISKGKKGGKK. Positions 1-20 are disordered; the sequence is MAVGKNKRISKGKKGGKKKA.

The protein belongs to the eukaryotic ribosomal protein eS1 family. As to quaternary structure, component of the small ribosomal subunit. Mature ribosomes consist of a small (40S) and a large (60S) subunit. The 40S subunit contains about 33 different proteins and 1 molecule of RNA (18S). The 60S subunit contains about 49 different proteins and 3 molecules of RNA (25S, 5.8S and 5S).

The protein localises to the cytoplasm. This Vitis vinifera (Grape) protein is Small ribosomal subunit protein eS1y.